The following is a 302-amino-acid chain: tRNA dimethylallyltransferase (302 aa).

Residue 21-28 (GPTASGKS) participates in ATP binding. Substrate is bound at residue 23–28 (TASGKS).

The protein belongs to the IPP transferase family. In terms of assembly, monomer. It depends on Mg(2+) as a cofactor.

It catalyses the reaction adenosine(37) in tRNA + dimethylallyl diphosphate = N(6)-dimethylallyladenosine(37) in tRNA + diphosphate. Catalyzes the transfer of a dimethylallyl group onto the adenine at position 37 in tRNAs that read codons beginning with uridine, leading to the formation of N6-(dimethylallyl)adenosine (i(6)A). This chain is tRNA dimethylallyltransferase, found in Paracoccus denitrificans (strain Pd 1222).